The primary structure comprises 299 residues: Glycine--tRNA ligase alpha subunit (299 aa).

This sequence belongs to the class-II aminoacyl-tRNA synthetase family. As to quaternary structure, tetramer of two alpha and two beta subunits.

The protein resides in the cytoplasm. The catalysed reaction is tRNA(Gly) + glycine + ATP = glycyl-tRNA(Gly) + AMP + diphosphate. This Dictyoglomus thermophilum (strain ATCC 35947 / DSM 3960 / H-6-12) protein is Glycine--tRNA ligase alpha subunit.